The primary structure comprises 235 residues: Probable septum site-determining protein MinC (235 aa).

The disordered stretch occupies residues 104-125 (KAVRPAPVEPATPSEPPQNANP). The span at 110-119 (PVEPATPSEP) shows a compositional bias: pro residues.

This sequence belongs to the MinC family. In terms of assembly, interacts with MinD and FtsZ.

Its function is as follows. Cell division inhibitor that blocks the formation of polar Z ring septums. Rapidly oscillates between the poles of the cell to destabilize FtsZ filaments that have formed before they mature into polar Z rings. Prevents FtsZ polymerization. In Salmonella enteritidis PT4 (strain P125109), this protein is Probable septum site-determining protein MinC.